Here is a 1241-residue protein sequence, read N- to C-terminus: Anion exchange protein 2 (1241 aa).

A disordered region spans residues 1–240 (MSSAPRRPAK…RSYNLQERRR (240 aa)). Residues 1–707 (MSSAPRRPAK…SDFRDALDPQ (707 aa)) are Cytoplasmic-facing. Composition is skewed to basic and acidic residues over residues 37–49 (ELHRTLGVERFEE) and 58–75 (GGEEPGRSYGEEDFEYHR). Composition is skewed to basic residues over residues 76 to 85 (QSSHHIHHPL) and 94 to 110 (RRRKTPQGPGRKPRRRP). Residues serine 113, serine 132, serine 144, serine 170, serine 172, and serine 173 each carry the phosphoserine modification. Positions 120-133 (TIEEGEEDEDEASE) are enriched in acidic residues. The segment covering 141 to 155 (TQPSPVSTPSSVQFF) has biased composition (low complexity). The residue at position 183 (threonine 183) is a Phosphothreonine. The segment covering 189–209 (GAQAGTQVEEAEAEAVAVASG) has biased composition (low complexity). Residues 210-219 (TAGGDDGGAS) are compositionally biased toward gly residues. The residue at position 243 (serine 243) is a Phosphoserine. Threonine 257 is modified (phosphothreonine). The residue at position 274 (lysine 274) is an N6-methyllysine. Residues 288 to 320 (LVRKNAKGSTQSGREGREPGPTPRARPRAPHKP) are disordered. Serine 443 carries the post-translational modification Phosphoserine. A disordered region spans residues 449–471 (SLLGHHHGQGAESDPHVTEPLMG). 4 consecutive transmembrane segments (helical) span residues 708–731 (CLAAVIFIYFAALSPAITFGGLLG), 737–774 (LIGVSELIMSTALQGVVFCLLGAQPLLVIGFSGPLLVF), 784–816 (SNHLEYLVGRVWIGFWLVFLALLMVALEGSFLV), and 826–847 (IFAFLISLIFIYETFYKLVKIF). The interval 708–1241 (CLAAVIFIYF…DEYNEMPMPV (534 aa)) is membrane (anion exchange). Over 848-900 (QEHPLHGCSASNSSEVDGGENMTWAGARPTLGPGNRSLAGQSGQGKPRGQPNT) the chain is Extracellular. N-linked (GlcNAc...) asparagine glycosylation is found at asparagine 859, asparagine 868, and asparagine 882. A helical transmembrane segment spans residues 901-918 (ALLSLVLMAGTFFIAFFL). Residues 919 to 933 (RKFKNSRFFPGRIRR) lie on the Cytoplasmic side of the membrane. The next 5 membrane-spanning stretches (helical) occupy residues 934 to 954 (VIGDFGVPIAILIMVLVDYSI), 988 to 1010 (PFPVWMMVASLLPAILVFILIFM), 1036 to 1059 (LLLIVAMGGICALFGLPWLAAATV), 1091 to 1136 (VTGL…IQFY), and 1163 to 1199 (MHLFTALQLLCLALLWAVMSTAASLAFPFILILTVPL). Cysteine 1173 is lipidated: S-palmitoyl cysteine.

This sequence belongs to the anion exchanger (TC 2.A.31) family. As to expression, expressed in the liver, stomach, kidney, prostate, thyroid and rectum. In terms of tissue distribution, expressed in the liver and kidney.

It is found in the apical cell membrane. Its subcellular location is the basolateral cell membrane. It carries out the reaction hydrogencarbonate(in) + chloride(out) = hydrogencarbonate(out) + chloride(in). In terms of biological role, sodium-independent anion exchanger which mediates the electroneutral exchange of chloride for bicarbonate ions across the cell membrane. Plays an important role in osteoclast differentiation and function. Regulates bone resorption and calpain-dependent actin cytoskeleton organization in osteoclasts via anion exchange-dependent control of pH. Essential for intracellular pH regulation in CD8(+) T-cells upon CD3 stimulation, modulating CD8(+) T-cell responses. The protein is Anion exchange protein 2 (SLC4A2) of Homo sapiens (Human).